A 468-amino-acid polypeptide reads, in one-letter code: Tyrosine phenol-lyase (468 aa).

An N6-(pyridoxal phosphate)lysine modification is found at lysine 260.

This sequence belongs to the beta-eliminating lyase family. In terms of assembly, homotetramer. It depends on pyridoxal 5'-phosphate as a cofactor.

It carries out the reaction L-tyrosine + H2O = phenol + pyruvate + NH4(+). This chain is Tyrosine phenol-lyase, found in Lacrimispora saccharolytica (strain ATCC 35040 / DSM 2544 / NRCC 2533 / WM1) (Clostridium saccharolyticum).